A 150-amino-acid chain; its full sequence is Large ribosomal subunit protein bL9 (150 aa).

Belongs to the bacterial ribosomal protein bL9 family.

In terms of biological role, binds to the 23S rRNA. This chain is Large ribosomal subunit protein bL9, found in Leptothrix cholodnii (strain ATCC 51168 / LMG 8142 / SP-6) (Leptothrix discophora (strain SP-6)).